The chain runs to 169 residues: Vimentin-type intermediate filament-associated coiled-coil protein (169 aa).

Residues 7–89 are a coiled coil; sequence LQIREANAHL…VHSLQATVHQ (83 aa). Over residues 126 to 135 the composition is skewed to low complexity; it reads RLGPLPASDP. Residues 126–169 are disordered; that stretch reads RLGPLPASDPGHPPPGGPGPPLDNSTGEEADRDHLQPAVFGTTV. Positions 136 to 146 are enriched in pro residues; that stretch reads GHPPPGGPGPP.

It localises to the cytoplasm. This is Vimentin-type intermediate filament-associated coiled-coil protein (VMAC) from Homo sapiens (Human).